Reading from the N-terminus, the 345-residue chain is Myb/SANT-like DNA-binding domain-containing protein 4 (345 aa).

In terms of domain architecture, Myb-like spans 4-77; it reads LKRKRKSNFS…EVKRRYLDWR (74 aa). A Glycyl lysine isopeptide (Lys-Gly) (interchain with G-Cter in SUMO2) cross-link involves residue Lys9. Residue Ser106 is modified to Phosphoserine. Residues Lys114 and Lys142 each participate in a glycyl lysine isopeptide (Lys-Gly) (interchain with G-Cter in SUMO2) cross-link. The interval 141–160 is disordered; sequence VKVEEEERDPQSPEFEIEEE. Thr188 is subject to Phosphothreonine. Residues 203–345 are a coiled coil; it reads LLVNIEKQKL…LRIQKEGHLQ (143 aa). Residues Lys237, Lys254, and Lys273 each participate in a glycyl lysine isopeptide (Lys-Gly) (interchain with G-Cter in SUMO2) cross-link.

This is Myb/SANT-like DNA-binding domain-containing protein 4 (MSANTD4) from Bos taurus (Bovine).